The sequence spans 104 residues: Pole-localizer protein TmaR (104 aa).

Coiled coils occupy residues 7–34 (IVNQARRKNKLKRELLDNEKKVRDNRKR) and 76–96 (SAEISKARRDISRRIRELTEE).

Belongs to the pole-localizer TmaR family.

It is found in the cytoplasm. Pole-localizer protein involved in the regulation of several cellular processes. This is Pole-localizer protein TmaR from Vibrio atlanticus (strain LGP32) (Vibrio splendidus (strain Mel32)).